Reading from the N-terminus, the 507-residue chain is Histidine ammonia-lyase (507 aa).

The 5-imidazolinone (Ala-Gly) cross-link spans 145–147; it reads ASG. Serine 146 bears the 2,3-didehydroalanine (Ser) mark.

Belongs to the PAL/histidase family. Contains an active site 4-methylidene-imidazol-5-one (MIO), which is formed autocatalytically by cyclization and dehydration of residues Ala-Ser-Gly.

The protein resides in the cytoplasm. It carries out the reaction L-histidine = trans-urocanate + NH4(+). It functions in the pathway amino-acid degradation; L-histidine degradation into L-glutamate; N-formimidoyl-L-glutamate from L-histidine: step 1/3. This Treponema denticola (strain ATCC 35405 / DSM 14222 / CIP 103919 / JCM 8153 / KCTC 15104) protein is Histidine ammonia-lyase.